Here is a 396-residue protein sequence, read N- to C-terminus: Tryptophan synthase beta chain (396 aa).

Lysine 86 is modified (N6-(pyridoxal phosphate)lysine).

The protein belongs to the TrpB family. In terms of assembly, tetramer of two alpha and two beta chains. The cofactor is pyridoxal 5'-phosphate.

It carries out the reaction (1S,2R)-1-C-(indol-3-yl)glycerol 3-phosphate + L-serine = D-glyceraldehyde 3-phosphate + L-tryptophan + H2O. It participates in amino-acid biosynthesis; L-tryptophan biosynthesis; L-tryptophan from chorismate: step 5/5. Functionally, the beta subunit is responsible for the synthesis of L-tryptophan from indole and L-serine. This is Tryptophan synthase beta chain from Vibrio vulnificus (strain CMCP6).